We begin with the raw amino-acid sequence, 1368 residues long: MAYSFTEKKRIRKSFAKRATVHQVPFLLATQIESYTQFLQADTPPARRKTEGLQAAFNAIFPISSHNGLARMEFVSYHLSNPPFDVKECQQRGLTFHSALRAKVRLIINDRENPGKVKEVKEQEVYMGEIPLMTSTGSFVINGTERVIVSQLHRSPGVFFEHDKGKTHSSGKLLFSARIIPYRGSWLDFEFDPKDILYFRVDRRRKMPVTILLKSIGLTPEQILAHFFVFDNFTLQSEGAQLEFVPERLRGEVARFDIADKNGRVVVEKDKRINAKHIRDLDSAGTKLISVPEDYLLGRVLAKNIIDPDTGEVIANANDELTEALLENLREAGVKQIQTLYTNDLDQGPYMSQTLRVDETADQTAARIAIYRMMRPGEPPTEEAVEALFQRLFYSEESYDLSRVGRMKVNSRLGRPSGEGAMVLQDEDILETIKILVNLRNGKGEVDDIDHLGNRRVRCVGELAENQFRAGLSRVERAVKERLGQAETENLMPHDLINSKPISSAIREFFGSSQLSQFMDQTNPLSEITHKRRVSALGPGGLTRERAGFEVRDVHPTHYGRVCPIETPEGPNIGLINSLALYARLNEYGFLETPYRKVVDSKLTDEVDYLSAIEEGKYVVAQANATVDADGNLTDELVSAREGSERETRMVTPDRVQYIDVAPSQIVSAAASLVPFLEHDDANRALMGANMQRQAVPCLRPDKPLVGTGIERTVAVDSGTAVQAMRGGVVDYVDAMRIVIRVNDDEAVAGEVGVDIYNLIKYTRSNQNTNINQRPMVKVGDHVARGDVIADGASTDLGELALGQNMLVAFMPWNGYNFEDSILISERVVAEDRYTSIHIEELSVVARDTKLGPEEITRDISNLAEAQLARLDESGITYIGAEVEAGDVLVGKVTPKGETQLTPEEKLLRAIFGEKASDVKDTSLRVPSGMSGIVIDVQVFTREGVTRDKRAQSIIDDELKRYRLDLNDQLRIVEGDAFQRLERLLVDKTVNGGPKKLAKGAKITKEYLADIDKYHWFDIRPADEELAAQLEAVKEAIEQKRHEFDLAFEEKRKKLTQGDELPPGVIKMVKVYLAVKRRLQPGDKMAGRHGNKGVVSKIVPIEDMPYMADGTPADIVLNPLGVPSRMNVGQILETHLGWAARGLGQRIGDMLKAQAKAQELRTLLSQIYNESGKPEDLDSLSDAEVLELANNLKKGVPFATPVFDGAHEDEIRRMLDLAYPDDVAREKGLTASKQQVTLFDGRTGEAFERPVTLGVMHMLKLHHLVDDKMHARSTGPYSLVTQQPLGGKAQFGGQRFGEMEVWALEAYGASYVLQEMLTVKSDDVNGRTKVYENIVKGEHSIDAGMPESFNVLVKEIRSLGIDIDLDRY.

The protein belongs to the RNA polymerase beta chain family. In terms of assembly, the RNAP catalytic core consists of 2 alpha, 1 beta, 1 beta' and 1 omega subunit. When a sigma factor is associated with the core the holoenzyme is formed, which can initiate transcription.

It catalyses the reaction RNA(n) + a ribonucleoside 5'-triphosphate = RNA(n+1) + diphosphate. Its function is as follows. DNA-dependent RNA polymerase catalyzes the transcription of DNA into RNA using the four ribonucleoside triphosphates as substrates. This chain is DNA-directed RNA polymerase subunit beta, found in Cupriavidus taiwanensis (strain DSM 17343 / BCRC 17206 / CCUG 44338 / CIP 107171 / LMG 19424 / R1) (Ralstonia taiwanensis (strain LMG 19424)).